The chain runs to 90 residues: RNA-binding protein Hfq (90 aa).

One can recognise a Sm domain in the interval 9-68; that stretch reads DPFLNALRRERVPVSIYLVNGIKLQGQVESFDQFVILLKNTVSQMVYKHAISTVVPARPF.

This sequence belongs to the Hfq family. Homohexamer.

Its function is as follows. RNA chaperone that binds small regulatory RNA (sRNAs) and mRNAs to facilitate mRNA translational regulation in response to envelope stress, environmental stress and changes in metabolite concentrations. Also binds with high specificity to tRNAs. This Shewanella oneidensis (strain ATCC 700550 / JCM 31522 / CIP 106686 / LMG 19005 / NCIMB 14063 / MR-1) protein is RNA-binding protein Hfq.